Here is a 359-residue protein sequence, read N- to C-terminus: Putative ankyrin repeat protein R190 (359 aa).

7 ANK repeats span residues 72-103 (RLMEIYHKMIIIDNNMDLLDLLFEIMSDDFRC), 105-133 (DCVILDLAIRHQRTDVFNKYIILGFDLNR), 142-173 (DEIILWYHQIKKYDTGIELCDYLIDNGASISI), 203-234 (LGNLLFWYLRNYYNVNIDIVETILSNGIDINN), 236-260 (HEYSYMLIGKFNVPIMNLFIRYGLI), 261-287 (IHDDVIDDACRYGNHLLVDYLMEIGHK), and 288-317 (PSKQIITNVIENHNVNIIKLFVKYNIDLSD).

The protein is Putative ankyrin repeat protein R190 of Acanthamoeba polyphaga (Amoeba).